The following is a 322-amino-acid chain: Arginase (322 aa).

Mn(2+) is bound by residues His113, Asp141, His143, and Asp145. Substrate is bound by residues 143 to 147 (HADIN), 154 to 156 (SGN), and Asp200. Mn(2+)-binding residues include Asp247 and Asp249. Substrate-binding residues include Thr261 and Glu292.

This sequence belongs to the arginase family. As to quaternary structure, homotrimer. The cofactor is Mn(2+).

It catalyses the reaction L-arginine + H2O = urea + L-ornithine. Its pathway is nitrogen metabolism; urea cycle; L-ornithine and urea from L-arginine: step 1/1. In Coccidioides immitis (strain RS) (Valley fever fungus), this protein is Arginase (ARG).